The sequence spans 420 residues: Sulfate adenylyltransferase (420 aa).

An N-acetylalanine modification is found at alanine 2.

It belongs to the sulfate adenylyltransferase family. Requires Mg(2+) as cofactor.

It carries out the reaction sulfate + ATP + H(+) = adenosine 5'-phosphosulfate + diphosphate. It participates in sulfur metabolism; hydrogen sulfide biosynthesis; sulfite from sulfate: step 1/3. Inhibited by adenosine 5'-phosphosulfate (APS), but not by 3'phosphoadenosine 5'-phosphosulfate (PAPS). Inhibited by AMP, ADP, CTP, GTP, ITP, UTP and anions other than those in group IV. In Pyropia yezoensis (Susabi-nori), this protein is Sulfate adenylyltransferase.